Reading from the N-terminus, the 297-residue chain is uncharacterized protein (297 aa).

The segment at 1–44 (MQKSKSIFIPKAFAPQQQAQAPPSKLDNKDPSVEGEGASKPKDD) is disordered. The segment covering 10–23 (PKAFAPQQQAQAPP) has biased composition (low complexity). Residues 26–44 (LDNKDPSVEGEGASKPKDD) are compositionally biased toward basic and acidic residues.

This is an uncharacterized protein from Invertebrate iridescent virus 3 (IIV-3).